The sequence spans 199 residues: 3-isopropylmalate dehydratase small subunit (199 aa).

It belongs to the LeuD family. LeuD type 1 subfamily. As to quaternary structure, heterodimer of LeuC and LeuD.

It carries out the reaction (2R,3S)-3-isopropylmalate = (2S)-2-isopropylmalate. Its pathway is amino-acid biosynthesis; L-leucine biosynthesis; L-leucine from 3-methyl-2-oxobutanoate: step 2/4. In terms of biological role, catalyzes the isomerization between 2-isopropylmalate and 3-isopropylmalate, via the formation of 2-isopropylmaleate. In Bacillus pumilus (strain SAFR-032), this protein is 3-isopropylmalate dehydratase small subunit.